Consider the following 464-residue polypeptide: 3-isopropylmalate dehydratase large subunit (464 aa).

Positions 345, 405, and 408 each coordinate [4Fe-4S] cluster.

This sequence belongs to the aconitase/IPM isomerase family. LeuC type 1 subfamily. In terms of assembly, heterodimer of LeuC and LeuD. [4Fe-4S] cluster serves as cofactor.

It catalyses the reaction (2R,3S)-3-isopropylmalate = (2S)-2-isopropylmalate. It participates in amino-acid biosynthesis; L-leucine biosynthesis; L-leucine from 3-methyl-2-oxobutanoate: step 2/4. Its function is as follows. Catalyzes the isomerization between 2-isopropylmalate and 3-isopropylmalate, via the formation of 2-isopropylmaleate. This Bacteroides thetaiotaomicron (strain ATCC 29148 / DSM 2079 / JCM 5827 / CCUG 10774 / NCTC 10582 / VPI-5482 / E50) protein is 3-isopropylmalate dehydratase large subunit.